A 118-amino-acid chain; its full sequence is Large ribosomal subunit protein uL22 (118 aa).

It belongs to the universal ribosomal protein uL22 family. As to quaternary structure, part of the 50S ribosomal subunit.

Functionally, this protein binds specifically to 23S rRNA; its binding is stimulated by other ribosomal proteins, e.g. L4, L17, and L20. It is important during the early stages of 50S assembly. It makes multiple contacts with different domains of the 23S rRNA in the assembled 50S subunit and ribosome. Its function is as follows. The globular domain of the protein is located near the polypeptide exit tunnel on the outside of the subunit, while an extended beta-hairpin is found that lines the wall of the exit tunnel in the center of the 70S ribosome. The chain is Large ribosomal subunit protein uL22 from Nostoc punctiforme (strain ATCC 29133 / PCC 73102).